Consider the following 825-residue polypeptide: MSSSSLRVLAIGNNPNILFYTSRFQLAKNIDLYHVNDSKSCQFEIETEYYGKDRFELENHFTSIEHLTEALSSKSSEAVFDIIIMSAPSLQELSSLASKLTSIIDSNTKIFLESSGFIQLEPFVKLSMESPHVNVFSILTDLDIRQIGPNHFKHFPSTAKENTIYLGESKSSTEKYSSGVITLLTTFEKLFAKLFSNIKINLCNFSSIEFLSQQWKLAISRICFDPLLIMFEQENPSDLDQQIIAKPLISGLVTEIITVAKTMGARLNSSHDNENSLLSLWKNSYHSTNKPPALVYHFIHQTTPLNIDILLLQTILLADDFGIKTPYLEFLYSVLSQFERLNSGKSKWFIRSDEKTQILQSLQKSQKNESALQTQITSLQGQISKLRQELLMQAKQHEMETNELKEKHQVALKAQAQAQAQAQSQAQTSIEALTPTEATNQSDTNEYKATGTPNLRDIEDMALYSVNYGDSPVRSPPPVVSSQPQMNSPLSSHSQTFGENNGTNDKLLQERELQLRKKELELQERELEFQKRALQQQRFNNSNNSIPRKPSFPQLQQSANVRSNSRGMHGTNGAMSQPASAGNFVDPISSSIAAYDPQQPPSLPLQQPQQSVQVQPFHSHSIKPTSRKNRNSNMPNIGNPSSINMSDFGRPPNNSSQTRLNSMPTHSIVNQNRLRSQQSKNKLNMPHATNPNNTFNQVPAPSLNNHVPTQRQFSSSTMIEVTNNNNKVNNSSSNPDISTNSVVHNAMQFTNTNNNTSSTVDINDPKNIAPPPTTSVSAPSTPTLSSSSQMANMASPSTDNGDNEEKNGGKKKRFGLFKKKNKSKK.

A coiled-coil region spans residues Gln366 to Gln423. Ser471 bears the Phosphoserine mark. Disordered stretches follow at residues Pro472–Thr503 and Arg538–Pro664. The segment covering Val480–Pro489 has biased composition (low complexity). Residues Leu490–Thr503 show a composition bias toward polar residues. Phosphothreonine is present on Thr496. Ser551 carries the phosphoserine modification. Over residues Pro553 to Arg566 the composition is skewed to polar residues. Over residues Pro604–Pro616 the composition is skewed to low complexity. 2 stretches are compositionally biased toward polar residues: residues Asn631–Met645 and Pro652–Pro664. A Phosphoserine modification is found at Ser662. Residues Thr739 and Thr756 each carry the phosphothreonine modification. Composition is skewed to low complexity over residues Thr750 to Thr759 and Thr774 to Ser788. The segment at Thr750–Lys825 is disordered. Ser757 is modified (phosphoserine). The segment covering Gln789–Thr798 has biased composition (polar residues). The span at Gly809–Lys825 shows a compositional bias: basic residues.

Belongs to the PAM1/SVL3 family.

The protein localises to the cytoplasm. Its subcellular location is the bud. It is found in the bud neck. The protein resides in the cell cortex. May have a vacuolar function. In Saccharomyces cerevisiae (strain ATCC 204508 / S288c) (Baker's yeast), this protein is Styryl dye vacuolar localization protein 3 (SVL3).